The chain runs to 257 residues: 1-(5-phosphoribosyl)-5-[(5-phosphoribosylamino)methylideneamino] imidazole-4-carboxamide isomerase (257 aa).

The active-site Proton acceptor is Asp8. The active-site Proton donor is the Asp129.

It belongs to the HisA/HisF family.

The protein localises to the cytoplasm. It carries out the reaction 1-(5-phospho-beta-D-ribosyl)-5-[(5-phospho-beta-D-ribosylamino)methylideneamino]imidazole-4-carboxamide = 5-[(5-phospho-1-deoxy-D-ribulos-1-ylimino)methylamino]-1-(5-phospho-beta-D-ribosyl)imidazole-4-carboxamide. It functions in the pathway amino-acid biosynthesis; L-histidine biosynthesis; L-histidine from 5-phospho-alpha-D-ribose 1-diphosphate: step 4/9. The chain is 1-(5-phosphoribosyl)-5-[(5-phosphoribosylamino)methylideneamino] imidazole-4-carboxamide isomerase from Rippkaea orientalis (strain PCC 8801 / RF-1) (Cyanothece sp. (strain PCC 8801)).